A 229-amino-acid chain; its full sequence is UPF0758 protein Moth_0536 (229 aa).

The 123-residue stretch at 107–229 (VIRNPRDVAG…FTSLKERNLL (123 aa)) folds into the MPN domain. Histidine 178, histidine 180, and aspartate 191 together coordinate Zn(2+). The JAMM motif motif lies at 178 to 191 (HNHPSGDPTPSQED).

This sequence belongs to the UPF0758 family.

The polypeptide is UPF0758 protein Moth_0536 (Moorella thermoacetica (strain ATCC 39073 / JCM 9320)).